Here is a 114-residue protein sequence, read N- to C-terminus: DNA-directed RNA polymerases II, IV and V subunit 9A (114 aa).

Zn(2+) contacts are provided by Cys7, Cys10, Cys29, Cys32, Cys76, Cys79, Cys103, and Cys108. The segment at 72-113 (KAVRCSKCQHREAVFFQATARGEEGMTLFFVCCNPNCGHRWR) adopts a TFIIS-type zinc-finger fold.

The protein belongs to the archaeal RpoM/eukaryotic RPA12/RPB9/RPC11 RNA polymerase family. As to quaternary structure, component of the RNA polymerase II, IV and V complexes. Interacts with NRPD1.

It is found in the nucleus. The protein localises to the nucleolus. DNA-dependent RNA polymerase catalyzes the transcription of DNA into RNA using the four ribonucleoside triphosphates as substrates. Component of RNA polymerase II which synthesizes mRNA precursors and many functional non-coding RNAs. Pol II is the central component of the basal RNA polymerase II transcription machinery. It is composed of mobile elements that move relative to each other. Component of RNA polymerases IV and V which mediate short-interfering RNAs (siRNA) accumulation and subsequent RNA-directed DNA methylation-dependent (RdDM) transcriptional gene silencing (TGS) of endogenous repeated sequences, including transposable elements. Required for RNA silencing. The protein is DNA-directed RNA polymerases II, IV and V subunit 9A (NRPB9A) of Arabidopsis thaliana (Mouse-ear cress).